The following is a 512-amino-acid chain: Maturase K (512 aa).

This sequence belongs to the intron maturase 2 family. MatK subfamily.

The protein resides in the plastid. It is found in the chloroplast. Functionally, usually encoded in the trnK tRNA gene intron. Probably assists in splicing its own and other chloroplast group II introns. In Lemna aequinoctialis (Lesser duckweed), this protein is Maturase K.